Here is a 720-residue protein sequence, read N- to C-terminus: Methionine--tRNA ligase (720 aa).

A 'HIGH' region motif is present at residues 27 to 37 (PYANGQIHIGH). Positions 158, 161, 171, and 174 each coordinate Zn(2+). A 'KMSKS' region motif is present at residues 348–352 (KMSKS). Lys-351 serves as a coordination point for ATP. The 107-residue stretch at 614–720 (DFAKVDLRIA…SGAKPGMRVK (107 aa)) folds into the tRNA-binding domain.

Belongs to the class-I aminoacyl-tRNA synthetase family. MetG type 1 subfamily. As to quaternary structure, homodimer. It depends on Zn(2+) as a cofactor.

Its subcellular location is the cytoplasm. The enzyme catalyses tRNA(Met) + L-methionine + ATP = L-methionyl-tRNA(Met) + AMP + diphosphate. Is required not only for elongation of protein synthesis but also for the initiation of all mRNA translation through initiator tRNA(fMet) aminoacylation. The protein is Methionine--tRNA ligase of Burkholderia ambifaria (strain ATCC BAA-244 / DSM 16087 / CCUG 44356 / LMG 19182 / AMMD) (Burkholderia cepacia (strain AMMD)).